Here is a 427-residue protein sequence, read N- to C-terminus: Cysteate synthase (427 aa).

Lys-104 bears the N6-(pyridoxal phosphate)lysine mark. Positions 130 and 382 each coordinate pyridoxal 5'-phosphate.

This sequence belongs to the threonine synthase family. Cysteate synthase subfamily. Homotrimer. Pyridoxal 5'-phosphate is required as a cofactor.

It catalyses the reaction O-phospho-L-serine + sulfite + H(+) = L-cysteate + phosphate. The protein operates within cofactor biosynthesis; coenzyme M biosynthesis. In terms of biological role, specifically catalyzes the beta-elimination of phosphate from L-phosphoserine and the beta-addition of sulfite to the dehydroalanine intermediate to produce L-cysteate. The polypeptide is Cysteate synthase (Methanocella paludicola (strain DSM 17711 / JCM 13418 / NBRC 101707 / SANAE)).